Here is a 345-residue protein sequence, read N- to C-terminus: GDP-mannose transporter (345 aa).

Residues 1–8 lie on the Cytoplasmic side of the membrane; sequence MDNHMLNR. A helical transmembrane segment spans residues 9–29; it reads ISKSPILPVVSYCMASILMTL. Residues 30-40 lie on the Lumenal side of the membrane; that stretch reads TNKYVLSSPGY. Residues 41-61 form a helical membrane-spanning segment; the sequence is NMNFLLLTVQSTVCVAAIGIL. Residues 62 to 78 are Cytoplasmic-facing; sequence KRLKVINYRDFDFREAK. The chain crosses the membrane as a helical span at residues 79 to 101; that stretch reads FWFPISFLLVAMIYTASKALQFL. The Lumenal portion of the chain corresponds to 102-104; it reads SVP. A helical membrane pass occupies residues 105-127; it reads VYTIFKNLTIIIIAYGEVLWFGG. Residues 128 to 131 lie on the Cytoplasmic side of the membrane; sequence HVTA. A helical membrane pass occupies residues 132 to 150; that stretch reads LTLFSFGLMVLSSIVAAWA. Topologically, residues 151–161 are lumenal; it reads DIQSSSFASQT. Residues 162-182 traverse the membrane as a helical segment; it reads LNSGYLWMVLNCLTNAAFVLA. Over 183 to 194 the chain is Cytoplasmic; it reads MRKRIKLTNFRD. A helical transmembrane segment spans residues 195 to 215; sequence FDTMFYNNLLSIPVLVICTLF. Over 216 to 233 the chain is Lumenal; it reads TEDWSAENIAQNFPPDAK. Residues 234 to 254 traverse the membrane as a helical segment; sequence FGVLMAMAISGVSSVGISYTS. Over 255 to 264 the chain is Cytoplasmic; the sequence is AWCVRVTSST. The helical transmembrane segment at 265–285 threads the bilayer; sequence TYSMVGALNKLPLAIAGLVFF. Topologically, residues 286-288 are lumenal; it reads DAP. A helical membrane pass occupies residues 289 to 309; that stretch reads ITFGSVTAILLGFISGVVYAV. The Cytoplasmic portion of the chain corresponds to 310–345; it reads AKSQQQRQKDPATILPMTHNPVSASSQSMRDSLSKS. A disordered region spans residues 319 to 345; that stretch reads DPATILPMTHNPVSASSQSMRDSLSKS. A compositionally biased stretch (polar residues) spans 329–345; the sequence is NPVSASSQSMRDSLSKS.

It belongs to the TPT transporter family. SLC35D subfamily. As to quaternary structure, homooligomer.

Its subcellular location is the golgi apparatus membrane. The protein localises to the cytoplasmic vesicle membrane. The protein resides in the endoplasmic reticulum membrane. In terms of biological role, involved in the import of GDP-mannose from the cytoplasm into the Golgi lumen. This chain is GDP-mannose transporter (vrg4), found in Schizosaccharomyces pombe (strain 972 / ATCC 24843) (Fission yeast).